Reading from the N-terminus, the 371-residue chain is tRNA 2-selenouridine synthase (371 aa).

Residues 12-135 (FLDDVPMMDM…MRTFLLDTTQ (124 aa)) enclose the Rhodanese domain. The active-site S-selanylcysteine intermediate is the Cys-95.

This sequence belongs to the SelU family. In terms of assembly, monomer.

It carries out the reaction 5-methylaminomethyl-2-thiouridine(34) in tRNA + selenophosphate + (2E)-geranyl diphosphate + H2O + H(+) = 5-methylaminomethyl-2-selenouridine(34) in tRNA + (2E)-thiogeraniol + phosphate + diphosphate. The enzyme catalyses 5-methylaminomethyl-2-thiouridine(34) in tRNA + (2E)-geranyl diphosphate = 5-methylaminomethyl-S-(2E)-geranyl-thiouridine(34) in tRNA + diphosphate. The catalysed reaction is 5-methylaminomethyl-S-(2E)-geranyl-thiouridine(34) in tRNA + selenophosphate + H(+) = 5-methylaminomethyl-2-(Se-phospho)selenouridine(34) in tRNA + (2E)-thiogeraniol. It catalyses the reaction 5-methylaminomethyl-2-(Se-phospho)selenouridine(34) in tRNA + H2O = 5-methylaminomethyl-2-selenouridine(34) in tRNA + phosphate. Functionally, involved in the post-transcriptional modification of the uridine at the wobble position (U34) of tRNA(Lys), tRNA(Glu) and tRNA(Gln). Catalyzes the conversion of 2-thiouridine (S2U-RNA) to 2-selenouridine (Se2U-RNA). Acts in a two-step process involving geranylation of 2-thiouridine (S2U) to S-geranyl-2-thiouridine (geS2U) and subsequent selenation of the latter derivative to 2-selenouridine (Se2U) in the tRNA chain. The polypeptide is tRNA 2-selenouridine synthase (Pseudomonas entomophila (strain L48)).